Reading from the N-terminus, the 450-residue chain is Bifunctional protein GlmU (450 aa).

The tract at residues 1–217 (MKTLILAAGL…VDEITGVNNR (217 aa)) is pyrophosphorylase. UDP-N-acetyl-alpha-D-glucosamine-binding positions include 6-9 (LAAG), K20, Q68, 73-74 (GT), 95-97 (YGD), G134, E146, N161, and N215. D97 contacts Mg(2+). A Mg(2+)-binding site is contributed by N215. The segment at 218-238 (IQLANLEKKIRRKINEKLMNQ) is linker. Residues 239–450 (GVRIIDPNAV…GGQKNANNKK (212 aa)) are N-acetyltransferase. UDP-N-acetyl-alpha-D-glucosamine is bound by residues R320 and K338. Catalysis depends on H350, which acts as the Proton acceptor. UDP-N-acetyl-alpha-D-glucosamine contacts are provided by Y353 and N364. Acetyl-CoA is bound by residues A367, 373-374 (NY), S392, A410, and R427.

The protein in the N-terminal section; belongs to the N-acetylglucosamine-1-phosphate uridyltransferase family. This sequence in the C-terminal section; belongs to the transferase hexapeptide repeat family. In terms of assembly, homotrimer. Requires Mg(2+) as cofactor.

It localises to the cytoplasm. It catalyses the reaction alpha-D-glucosamine 1-phosphate + acetyl-CoA = N-acetyl-alpha-D-glucosamine 1-phosphate + CoA + H(+). The catalysed reaction is N-acetyl-alpha-D-glucosamine 1-phosphate + UTP + H(+) = UDP-N-acetyl-alpha-D-glucosamine + diphosphate. It functions in the pathway nucleotide-sugar biosynthesis; UDP-N-acetyl-alpha-D-glucosamine biosynthesis; N-acetyl-alpha-D-glucosamine 1-phosphate from alpha-D-glucosamine 6-phosphate (route II): step 2/2. It participates in nucleotide-sugar biosynthesis; UDP-N-acetyl-alpha-D-glucosamine biosynthesis; UDP-N-acetyl-alpha-D-glucosamine from N-acetyl-alpha-D-glucosamine 1-phosphate: step 1/1. The protein operates within bacterial outer membrane biogenesis; LPS lipid A biosynthesis. Functionally, catalyzes the last two sequential reactions in the de novo biosynthetic pathway for UDP-N-acetylglucosamine (UDP-GlcNAc). The C-terminal domain catalyzes the transfer of acetyl group from acetyl coenzyme A to glucosamine-1-phosphate (GlcN-1-P) to produce N-acetylglucosamine-1-phosphate (GlcNAc-1-P), which is converted into UDP-GlcNAc by the transfer of uridine 5-monophosphate (from uridine 5-triphosphate), a reaction catalyzed by the N-terminal domain. The polypeptide is Bifunctional protein GlmU (Thermosipho melanesiensis (strain DSM 12029 / CIP 104789 / BI429)).